Here is a 742-residue protein sequence, read N- to C-terminus: Photosystem I P700 chlorophyll a apoprotein A2 (742 aa).

A run of 8 helical transmembrane segments spans residues Leu-46–Ala-69, Leu-135–Gln-158, Leu-175–Ile-199, Ile-273–Tyr-291, Leu-336–Gly-359, Ser-375–Val-401, Ala-423–His-445, and Phe-525–Ile-543. Residues Cys-567 and Cys-576 each coordinate [4Fe-4S] cluster. A run of 2 helical transmembrane segments spans residues Ala-583–Trp-604 and Leu-651–Ile-673. 3 residues coordinate divinyl chlorophyll a: His-662, Met-670, and Tyr-678. Trp-679 is a phylloquinone binding site. Residues Leu-715–Ala-735 form a helical membrane-spanning segment.

This sequence belongs to the PsaA/PsaB family. As to quaternary structure, the PsaA/B heterodimer binds the P700 divinyl chlorophyll special pair and subsequent electron acceptors. PSI consists of a core antenna complex that captures photons, and an electron transfer chain that converts photonic excitation into a charge separation. The cyanobacterial PSI reaction center is composed of one copy each of PsaA,B,C,D,E,F,I,J,K,L,M and X, and forms trimeric complexes. The cofactor is PSI electron transfer chain: 5 divinyl chlorophyll a, 1 divinyl chlorophyll a', 2 phylloquinones and 3 4Fe-4S clusters. PSI core antenna: 90 divinyl chlorophyll a, 22 carotenoids, 3 phospholipids and 1 galactolipid. P700 is a divinyl chlorophyll a/divinyl chlorophyll a' dimer, A0 is one or more divinyl chlorophyll a, A1 is one or both phylloquinones and FX is a shared 4Fe-4S iron-sulfur center..

The protein resides in the cellular thylakoid membrane. The catalysed reaction is reduced [plastocyanin] + hnu + oxidized [2Fe-2S]-[ferredoxin] = oxidized [plastocyanin] + reduced [2Fe-2S]-[ferredoxin]. In terms of biological role, psaA and PsaB bind P700, the primary electron donor of photosystem I (PSI), as well as the electron acceptors A0, A1 and FX. PSI is a plastocyanin/cytochrome c6-ferredoxin oxidoreductase, converting photonic excitation into a charge separation, which transfers an electron from the donor P700 chlorophyll pair to the spectroscopically characterized acceptors A0, A1, FX, FA and FB in turn. Oxidized P700 is reduced on the lumenal side of the thylakoid membrane by plastocyanin or cytochrome c6. The chain is Photosystem I P700 chlorophyll a apoprotein A2 from Prochlorococcus marinus (strain MIT 9312).